We begin with the raw amino-acid sequence, 156 residues long: Phosphopantetheine adenylyltransferase (156 aa).

Substrate is bound at residue threonine 9. ATP contacts are provided by residues 9-10 (TF) and histidine 17. Substrate contacts are provided by lysine 41, leucine 73, and arginine 87. ATP is bound by residues 88–90 (GVR), glutamate 98, and 123–129 (WAFVSST).

This sequence belongs to the bacterial CoaD family. As to quaternary structure, homohexamer. Mg(2+) is required as a cofactor.

The protein resides in the cytoplasm. The catalysed reaction is (R)-4'-phosphopantetheine + ATP + H(+) = 3'-dephospho-CoA + diphosphate. It functions in the pathway cofactor biosynthesis; coenzyme A biosynthesis; CoA from (R)-pantothenate: step 4/5. Reversibly transfers an adenylyl group from ATP to 4'-phosphopantetheine, yielding dephospho-CoA (dPCoA) and pyrophosphate. The sequence is that of Phosphopantetheine adenylyltransferase from Haemophilus influenzae (strain ATCC 51907 / DSM 11121 / KW20 / Rd).